The chain runs to 216 residues: Large ribosomal subunit protein uL3 (216 aa).

The segment at 132–155 is disordered; the sequence is QDASHGNSRSHRVPGSIGQNQTPG. At glutamine 152 the chain carries N5-methylglutamine.

It belongs to the universal ribosomal protein uL3 family. As to quaternary structure, part of the 50S ribosomal subunit. Forms a cluster with proteins L14 and L19. Methylated by PrmB.

Functionally, one of the primary rRNA binding proteins, it binds directly near the 3'-end of the 23S rRNA, where it nucleates assembly of the 50S subunit. This Legionella pneumophila (strain Paris) protein is Large ribosomal subunit protein uL3.